Reading from the N-terminus, the 343-residue chain is Leucine-rich repeat-containing protein 23 (343 aa).

The segment covering 1–30 (MSDEDDLEDSEPDQDDSEKEEDEKETEEGE) has biased composition (acidic residues). The interval 1 to 47 (MSDEDDLEDSEPDQDDSEKEEDEKETEEGEDYRKEGEEFPEEWLPTP) is disordered. LRR repeat units follow at residues 92–113 (HLRYVDISENHLTDLSPLNYLT), 114–134 (HLLWLKADGNRLRSAQMNELP), 135–155 (YLQIASFAYNQITDTEGISHP), 156–177 (RLETLNLKGNSIHMVTGLDPEK), 180–200 (SLHTVELRGNQLESTLGINLP), 201–222 (KLKNLYLAQNMLKKVEGLEDLS), 223–244 (NLTTLHLRDNQIDTLSGFSREM), and 246–267 (SLQYLNLRGNMVANLGELAKLR). The interval 208–343 (AQNMLKKVEG…RDLEPEQSLI (136 aa)) is interaction with RSPH9. Positions 280–318 (NPCTDETSYRQEALVQMPYLERLDKEFYEEEERAEADVI) constitute an LRRCT domain. A coiled-coil region spans residues 307–329 (YEEEERAEADVIRQRLKEEKEQE). A compositionally biased stretch (basic and acidic residues) spans 318–337 (IRQRLKEEKEQEPEPQRDLE). The disordered stretch occupies residues 318-343 (IRQRLKEEKEQEPEPQRDLEPEQSLI).

Component of the axonemal radial spoke complex. Interacts with RSPH3. Interacts with RSPH9. Expressed in spermatozoa.

It localises to the cell projection. The protein resides in the cilium. Its subcellular location is the flagellum. It is found in the cytoplasm. The protein localises to the cytoskeleton. It localises to the flagellum axoneme. Essential for sperm motility and male fertility. Plays an important role in the proper assembly of the third radial spoke (RS3) head and the bridge structure between RS2 and RS3 in the sperm flagella. This chain is Leucine-rich repeat-containing protein 23 (LRRC23), found in Homo sapiens (Human).